A 63-amino-acid polypeptide reads, in one-letter code: Large ribosomal subunit protein bL32 (63 aa).

The interval methionine 1–valine 27 is disordered. Over residues lysine 7 to alanine 18 the composition is skewed to basic residues.

Belongs to the bacterial ribosomal protein bL32 family.

This chain is Large ribosomal subunit protein bL32, found in Chlorobium phaeobacteroides (strain DSM 266 / SMG 266 / 2430).